We begin with the raw amino-acid sequence, 436 residues long: UDP-N-acetylmuramate--L-alanine ligase (436 aa).

Residue 108-114 participates in ATP binding; that stretch reads GAHGKTS.

Belongs to the MurCDEF family.

Its subcellular location is the cytoplasm. The catalysed reaction is UDP-N-acetyl-alpha-D-muramate + L-alanine + ATP = UDP-N-acetyl-alpha-D-muramoyl-L-alanine + ADP + phosphate + H(+). It participates in cell wall biogenesis; peptidoglycan biosynthesis. Cell wall formation. The sequence is that of UDP-N-acetylmuramate--L-alanine ligase from Bacillus cereus (strain ZK / E33L).